A 510-amino-acid chain; its full sequence is ATP synthase subunit alpha (510 aa).

ATP is bound at residue 169–176 (GDRQTGKT).

Belongs to the ATPase alpha/beta chains family. F-type ATPases have 2 components, CF(1) - the catalytic core - and CF(0) - the membrane proton channel. CF(1) has five subunits: alpha(3), beta(3), gamma(1), delta(1), epsilon(1). CF(0) has four main subunits: a(1), b(1), b'(1) and c(9-12).

Its subcellular location is the cell inner membrane. The catalysed reaction is ATP + H2O + 4 H(+)(in) = ADP + phosphate + 5 H(+)(out). Functionally, produces ATP from ADP in the presence of a proton gradient across the membrane. The alpha chain is a regulatory subunit. The sequence is that of ATP synthase subunit alpha from Rhodopseudomonas palustris (strain BisA53).